Reading from the N-terminus, the 389-residue chain is Allantoicase (389 aa).

It belongs to the allantoicase family.

The enzyme catalyses allantoate + H2O = (S)-ureidoglycolate + urea. It participates in nitrogen metabolism; (S)-allantoin degradation; (S)-ureidoglycolate from allantoate (aminidohydrolase route): step 1/1. Utilization of purines as secondary nitrogen sources, when primary sources are limiting. This is Allantoicase (allc) from Xenopus tropicalis (Western clawed frog).